Reading from the N-terminus, the 354-residue chain is tRNA pseudouridine synthase D (354 aa).

Catalysis depends on aspartate 86, which acts as the Nucleophile. One can recognise a TRUD domain in the interval 162 to 309 (GVPNYFGPQR…LEVGRRALRL (148 aa)).

This sequence belongs to the pseudouridine synthase TruD family.

It catalyses the reaction uridine(13) in tRNA = pseudouridine(13) in tRNA. Functionally, responsible for synthesis of pseudouridine from uracil-13 in transfer RNAs. The chain is tRNA pseudouridine synthase D from Methylococcus capsulatus (strain ATCC 33009 / NCIMB 11132 / Bath).